A 509-amino-acid polypeptide reads, in one-letter code: Dihydrolipoyl dehydrogenase, mitochondrial (509 aa).

The N-terminal 35 residues, 1 to 35 (MQSWSRVYCSLVKRGHFSRISHGLQGVSVVPLRTY), are a transit peptide targeting the mitochondrion. The residue at position 66 (K66) is an N6-acetyllysine; alternate. K66 bears the N6-succinyllysine; alternate mark. Residues 71-80 (EKNETLGGTC) and K89 contribute to the FAD site. C80 and C85 are joined by a disulfide. N6-acetyllysine; alternate is present on residues K104, K122, K132, and K143. Residues K104, K122, K132, and K143 each carry the N6-succinyllysine; alternate modification. FAD is bound at residue G154. An N6-succinyllysine mark is found at K159 and K166. Residue 183–185 (TGS) participates in FAD binding. Residues 220–227 (GAGVIGVE) and E243 each bind NAD(+). 2 positions are modified to N6-succinyllysine: K273 and K277. Position 278 (V278) interacts with NAD(+). Residues S285 and S297 each carry the phosphoserine modification. NAD(+) is bound at residue G314. K346 is modified (N6-acetyllysine). Residues D355 and 361–364 (MLAH) contribute to the FAD site. An N6-acetyllysine; alternate modification is found at K410. K410 carries the post-translational modification N6-succinyllysine; alternate. N6-acetyllysine is present on residues K417 and K420. K430 carries the N6-succinyllysine modification. Catalysis depends on H487, which acts as the Proton acceptor. Position 505 is an N6-acetyllysine; alternate (K505). At K505 the chain carries N6-succinyllysine; alternate.

The protein belongs to the class-I pyridine nucleotide-disulfide oxidoreductase family. As to quaternary structure, homodimer. Part of the multimeric pyruvate dehydrogenase complex that contains multiple copies of pyruvate dehydrogenase (subunits PDHA (PDHA1 or PDHA2) and PDHB, E1), dihydrolipoamide acetyltransferase (DLAT, E2) and lipoamide dehydrogenase (DLD, E3). These subunits are bound to an inner core composed of about 48 DLAT and 12 PDHX molecules (by non covalent bonds). The 2-oxoglutarate dehydrogenase complex is composed of OGDH (2-oxoglutarate dehydrogenase; E1), DLST (dihydrolipoamide succinyltransferase; E2), DLD (dihydrolipoamide dehydrogenase; E3) and the assembly factor KGD4. It contains multiple copies of the three enzymatic components (E1, E2 and E3). In the nucleus, the 2-oxoglutarate dehydrogenase complex associates with KAT2A. Interacts with PDHX. FAD serves as cofactor. Post-translationally, tyrosine phosphorylated.

It is found in the mitochondrion matrix. The protein localises to the nucleus. It localises to the cell projection. The protein resides in the cilium. Its subcellular location is the flagellum. It is found in the cytoplasmic vesicle. The protein localises to the secretory vesicle. It localises to the acrosome. The catalysed reaction is N(6)-[(R)-dihydrolipoyl]-L-lysyl-[protein] + NAD(+) = N(6)-[(R)-lipoyl]-L-lysyl-[protein] + NADH + H(+). Its function is as follows. Lipoamide dehydrogenase is a component of the glycine cleavage system as well as an E3 component of three alpha-ketoacid dehydrogenase complexes (pyruvate-, alpha-ketoglutarate-, and branched-chain amino acid-dehydrogenase complex). The 2-oxoglutarate dehydrogenase complex is mainly active in the mitochondrion. A fraction of the 2-oxoglutarate dehydrogenase complex also localizes in the nucleus and is required for lysine succinylation of histones: associates with KAT2A on chromatin and provides succinyl-CoA to histone succinyltransferase KAT2A. In monomeric form may have additional moonlighting function as serine protease. Involved in the hyperactivation of spermatazoa during capacitation and in the spermatazoal acrosome reaction. This Bos taurus (Bovine) protein is Dihydrolipoyl dehydrogenase, mitochondrial (DLD).